The chain runs to 610 residues: Elongation factor 4 (610 aa).

The tr-type G domain occupies 11–193; sequence EKIRNFSIIA…QIVEKVPAPT (183 aa). GTP contacts are provided by residues 23-28 and 140-143; these read DHGKST and NKID.

This sequence belongs to the TRAFAC class translation factor GTPase superfamily. Classic translation factor GTPase family. LepA subfamily.

Its subcellular location is the cell membrane. It catalyses the reaction GTP + H2O = GDP + phosphate + H(+). In terms of biological role, required for accurate and efficient protein synthesis under certain stress conditions. May act as a fidelity factor of the translation reaction, by catalyzing a one-codon backward translocation of tRNAs on improperly translocated ribosomes. Back-translocation proceeds from a post-translocation (POST) complex to a pre-translocation (PRE) complex, thus giving elongation factor G a second chance to translocate the tRNAs correctly. Binds to ribosomes in a GTP-dependent manner. In Streptococcus pyogenes serotype M3 (strain ATCC BAA-595 / MGAS315), this protein is Elongation factor 4.